A 499-amino-acid chain; its full sequence is MARFVVAGPSEYLAITGWGIDDVKLAKKAWVFAGQKCSRFDISPVNYEFNVEAMSSEKLAFNLPAVFTIGPKITPAPAPEVDGASNQRRVLMPESEEKLLLYAKLIAPHDHASNHVKQLVKGVIEGETRVLAASMTMEEIFQGTKKFKQEVFDQVQLDLNKFGLYIYNANVKQLVDEPGHEYFSYLGKKTQQEAANKAKVDVAEERMKGEVGAKEREGLTRQNAAKVDAETKVVSVRQQGIGLREEAKVKAEVQVYENEREAEIAAAQAGLAMKKAGWEKQSKVAQVEAVKAVAIREAELQMEVERKNALRLTEKLKAEQLSKATVQYETQVQESNAALYNRQKAADATLYEQVKSAEARKAQADAMFFEQKLAEDARLYAKQKEAEALAMVGKAKVEYVTSMLQALGGDYGALRDYLMIDGGMYQEMARVNASAVSGMQPKISIWSGADGAAGEAGAGAMQQVAGVYKMLPPLLSTVHEQTGMQPPAWMGSLPKDGAN.

C37 carries S-palmitoyl cysteine lipidation. The stretch at 243–319 (LREEAKVKAE…LRLTEKLKAE (77 aa)) forms a coiled coil.

Belongs to the band 7/mec-2 family. Flotillin subfamily. Post-translationally, may be palmitoylated.

It localises to the cell membrane. It is found in the membrane. The protein localises to the caveola. May act as a scaffolding protein within caveolar membranes, functionally participating in formation of caveolae or caveolae-like vesicles. This Oryza sativa subsp. japonica (Rice) protein is Flotillin-like protein 2 (FLOT2).